The following is a 177-amino-acid chain: Large ribosomal subunit protein uL6 (177 aa).

This sequence belongs to the universal ribosomal protein uL6 family. As to quaternary structure, part of the 50S ribosomal subunit.

Functionally, this protein binds to the 23S rRNA, and is important in its secondary structure. It is located near the subunit interface in the base of the L7/L12 stalk, and near the tRNA binding site of the peptidyltransferase center. The sequence is that of Large ribosomal subunit protein uL6 from Neisseria gonorrhoeae (strain ATCC 700825 / FA 1090).